The primary structure comprises 240 residues: 4-hydroxy-tetrahydrodipicolinate reductase (240 aa).

NAD(+) is bound by residues 8 to 13, 78 to 80, and 102 to 105; these read GSTGKM, GTT, and SANM. The active-site Proton donor/acceptor is the His-134. His-135 is a binding site for (S)-2,3,4,5-tetrahydrodipicolinate. Lys-138 serves as the catalytic Proton donor. 144–145 is a (S)-2,3,4,5-tetrahydrodipicolinate binding site; sequence GT.

This sequence belongs to the DapB family.

It localises to the cytoplasm. The enzyme catalyses (S)-2,3,4,5-tetrahydrodipicolinate + NAD(+) + H2O = (2S,4S)-4-hydroxy-2,3,4,5-tetrahydrodipicolinate + NADH + H(+). It carries out the reaction (S)-2,3,4,5-tetrahydrodipicolinate + NADP(+) + H2O = (2S,4S)-4-hydroxy-2,3,4,5-tetrahydrodipicolinate + NADPH + H(+). Its pathway is amino-acid biosynthesis; L-lysine biosynthesis via DAP pathway; (S)-tetrahydrodipicolinate from L-aspartate: step 4/4. Functionally, catalyzes the conversion of 4-hydroxy-tetrahydrodipicolinate (HTPA) to tetrahydrodipicolinate. This is 4-hydroxy-tetrahydrodipicolinate reductase from Rickettsia canadensis (strain McKiel).